The primary structure comprises 116 residues: Large ribosomal subunit protein bL19 (116 aa).

This sequence belongs to the bacterial ribosomal protein bL19 family.

Functionally, this protein is located at the 30S-50S ribosomal subunit interface and may play a role in the structure and function of the aminoacyl-tRNA binding site. The chain is Large ribosomal subunit protein bL19 (rplS) from Streptomyces lividans.